The primary structure comprises 131 residues: Translation initiation factor 5A (131 aa).

At Lys37 the chain carries Hypusine.

Belongs to the eIF-5A family.

Its subcellular location is the cytoplasm. Functionally, functions by promoting the formation of the first peptide bond. In Methanococcus aeolicus (strain ATCC BAA-1280 / DSM 17508 / OCM 812 / Nankai-3), this protein is Translation initiation factor 5A (eIF5A).